The sequence spans 138 residues: Regulator of ribonuclease activity B (138 aa).

Positions 114 to 138 (YFEDPNGEDGDDEDFVDEDDDGVRH) are disordered. Residues 118–138 (PNGEDGDDEDFVDEDDDGVRH) are compositionally biased toward acidic residues.

The protein belongs to the RraB family. In terms of assembly, interacts with the C-terminal region of Rne.

The protein localises to the cytoplasm. Globally modulates RNA abundance by binding to RNase E (Rne) and regulating its endonucleolytic activity. Can modulate Rne action in a substrate-dependent manner by altering the composition of the degradosome. The polypeptide is Regulator of ribonuclease activity B (Escherichia coli (strain K12)).